We begin with the raw amino-acid sequence, 295 residues long: Trimeric intracellular cation channel type A (295 aa).

At 1 to 18 the chain is on the lumenal side; it reads MELLSALSLDDLAASFSK. Residues 19–39 form a helical membrane-spanning segment; it reads LPVFPLFDVAYYIISILYLKY. The Cytoplasmic portion of the chain corresponds to 40-51; the sequence is EPGAVDLSKRSP. The chain crosses the membrane as a helical span at residues 52 to 72; it reads VASWLCAMLYCFGSYILADVL. Residues 73-84 lie on the Lumenal side of the membrane; sequence LGESPIHYFSNN. A Ca(2+)-binding site is contributed by Gly74. Residues 85 to 105 form a helical membrane-spanning segment; sequence ANILLASAVWYLTFFCPLNIF. The Cytoplasmic portion of the chain corresponds to 106-144; it reads YKIVSFLPVKLVLVGMKEVVRVRKIAMGIHHAHHHYHHG. A 1,2-diacyl-sn-glycero-3-phospho-(1D-myo-inositol-4,5-bisphosphate) is bound by residues Lys122 and Arg126. The chain crosses the membrane as a helical span at residues 145-165; it reads WVIMVLIGWVKGSGVALMSNL. At 166-178 the chain is on the lumenal side; it reads EQLLRGVWKPETN. The chain crosses the membrane as a helical span at residues 179-199; it reads EILHMSFPTKASLYGAILFTL. At 200–201 the chain is on the cytoplasmic side; that stretch reads QQ. A helical transmembrane segment spans residues 202–222; it reads AHWLPISKAYLIFFFTLFMAV. Over 223 to 233 the chain is Lumenal; that stretch reads CKIYMTATHSH. Residues 234-254 traverse the membrane as a helical segment; the sequence is GSPFAIFESGICYVLFAAANG. The Cytoplasmic portion of the chain corresponds to 255-295; that stretch reads DHDDHGNHHHHHDDHDVSHSAGKSKEEHNEGTRKRKTKKAE. The segment at 258–295 is disordered; sequence DHGNHHHHHDDHDVSHSAGKSKEEHNEGTRKRKTKKAE. The segment covering 267 to 286 has biased composition (basic and acidic residues); it reads DDHDVSHSAGKSKEEHNEGT.

Belongs to the TMEM38 family. In terms of assembly, homotrimer; conformation seems to be controled by binding to diacylglycerol (DAG).

Its subcellular location is the sarcoplasmic reticulum membrane. The protein resides in the nucleus membrane. The enzyme catalyses K(+)(in) = K(+)(out). Its activity is regulated as follows. Channel activity is activated by a change of voltage within the sarcoplasmic reticulum lumen and blocked by luminal high Ca(2+) levels. In terms of biological role, intracellular monovalent cation channel required for maintenance of rapid intracellular calcium release. Acts as a potassium counter-ion channel that functions in synchronization with calcium release from intracellular stores. Opened by a change of voltage within the sarcoplasmic reticulum lumen. The chain is Trimeric intracellular cation channel type A (tmem38a) from Xenopus laevis (African clawed frog).